A 71-amino-acid chain; its full sequence is Pro-MCH (71 aa).

The N-terminal stretch at 1–20 (AKMSLSSYILILTLVLFSQG) is a signal peptide.

Belongs to the melanin-concentrating hormone family.

The protein localises to the secreted. The chain is Pro-MCH (PMCH) from Carlito syrichta (Philippine tarsier).